A 549-amino-acid polypeptide reads, in one-letter code: Glucose-6-phosphate isomerase (549 aa).

The active-site Proton donor is the glutamate 355. Residues histidine 387 and lysine 515 contribute to the active site.

It belongs to the GPI family.

Its subcellular location is the cytoplasm. It carries out the reaction alpha-D-glucose 6-phosphate = beta-D-fructose 6-phosphate. The protein operates within carbohydrate biosynthesis; gluconeogenesis. It functions in the pathway carbohydrate degradation; glycolysis; D-glyceraldehyde 3-phosphate and glycerone phosphate from D-glucose: step 2/4. Its function is as follows. Catalyzes the reversible isomerization of glucose-6-phosphate to fructose-6-phosphate. The chain is Glucose-6-phosphate isomerase from Mannheimia succiniciproducens (strain KCTC 0769BP / MBEL55E).